The following is a 761-amino-acid chain: Phosphoribosylformylglycinamidine synthase subunit PurL (761 aa).

Positions 1–13 (MTSRVDTVDNAAS) are enriched in polar residues. Residues 1–23 (MTSRVDTVDNAASTPDHPQPFAE) form a disordered region. H57 is a catalytic residue. ATP contacts are provided by Y60 and K104. E106 is a Mg(2+) binding site. Residues 107-110 (SHNH) and R129 each bind substrate. H108 (proton acceptor) is an active-site residue. D130 provides a ligand contact to Mg(2+). Q259 provides a ligand contact to substrate. Position 287 (D287) interacts with Mg(2+). Residue 331–333 (ESQ) coordinates substrate. ATP contacts are provided by N519 and G556. N557 provides a ligand contact to Mg(2+). Residue S559 participates in substrate binding.

It belongs to the FGAMS family. In terms of assembly, monomer. Part of the FGAM synthase complex composed of 1 PurL, 1 PurQ and 2 PurS subunits.

It is found in the cytoplasm. It catalyses the reaction N(2)-formyl-N(1)-(5-phospho-beta-D-ribosyl)glycinamide + L-glutamine + ATP + H2O = 2-formamido-N(1)-(5-O-phospho-beta-D-ribosyl)acetamidine + L-glutamate + ADP + phosphate + H(+). The protein operates within purine metabolism; IMP biosynthesis via de novo pathway; 5-amino-1-(5-phospho-D-ribosyl)imidazole from N(2)-formyl-N(1)-(5-phospho-D-ribosyl)glycinamide: step 1/2. Part of the phosphoribosylformylglycinamidine synthase complex involved in the purines biosynthetic pathway. Catalyzes the ATP-dependent conversion of formylglycinamide ribonucleotide (FGAR) and glutamine to yield formylglycinamidine ribonucleotide (FGAM) and glutamate. The FGAM synthase complex is composed of three subunits. PurQ produces an ammonia molecule by converting glutamine to glutamate. PurL transfers the ammonia molecule to FGAR to form FGAM in an ATP-dependent manner. PurS interacts with PurQ and PurL and is thought to assist in the transfer of the ammonia molecule from PurQ to PurL. The protein is Phosphoribosylformylglycinamidine synthase subunit PurL of Mycobacteroides abscessus (strain ATCC 19977 / DSM 44196 / CCUG 20993 / CIP 104536 / JCM 13569 / NCTC 13031 / TMC 1543 / L948) (Mycobacterium abscessus).